Consider the following 379-residue polypeptide: Putative cyclic ADP-D-ribose synthase TIR2 (379 aa).

One can recognise a TIR domain in the interval 254-379 (KVYDVFISHS…TISWTTGLVK (126 aa)). Glu335 is an active-site residue.

In terms of assembly, homodimer.

It localises to the cytoplasm. With respect to regulation, activated upon phage infection. One of 2 TIR-like protein components of the Thoeris antiviral defense system, composed of ThsA, TIR1 (thsB1) and TIR2 (thsB2). Phage infection activates this protein; by 70 minutes post-infection with phage SPO1, TIR2 generates a signal molecule that in turn activates the NAD(+) hydrolase activity of ThsA (tested with B.cereus). The signal is similar to cyclic ADP-D-ribose, but how it differs is unknown. Expression of Thoeris in B.subtilis (strain BEST7003) confers resistance to phages phi29, phi3T, SPBeta, SBSphi11, SBSphi13, SBSphiJ, SPO1 and SPR but not SBSphiC. The TIR paralogs confer resistance to different phages; this subunit confers resistance to phi3T, SPBeta, SBSphi13, SBSphiJ, SPO1 and SPR but not phi29, SBSphi11 or SBSphiC. There is overlap in the phage range for this system, both TIR1 and TIR2 are activated by SBSphi13, SBSphiJ, SPO1 and SPR. Probably hydrolyzes NAD(+) to make a cyclic ADP-D-ribose (cADPR) signaling molecule; might make 3'cADPR. This Cytobacillus dafuensis (Bacillus dafuensis) protein is Putative cyclic ADP-D-ribose synthase TIR2.